Consider the following 227-residue polypeptide: Uracil-DNA glycosylase (227 aa).

Asp68 (proton acceptor) is an active-site residue.

It belongs to the uracil-DNA glycosylase (UDG) superfamily. UNG family.

The protein localises to the cytoplasm. The enzyme catalyses Hydrolyzes single-stranded DNA or mismatched double-stranded DNA and polynucleotides, releasing free uracil.. In terms of biological role, excises uracil residues from the DNA which can arise as a result of misincorporation of dUMP residues by DNA polymerase or due to deamination of cytosine. This Mycobacterium ulcerans (strain Agy99) protein is Uracil-DNA glycosylase.